The primary structure comprises 1029 residues: Sodium/potassium-transporting ATPase subunit alpha-4 (1029 aa).

The interval 1-37 (MGLWGKKGTVAPHDQSPRRRPKKGLIKKKMVKREKQK) is disordered. The Cytoplasmic segment spans residues 1 to 95 (MGLWGKKGTV…NTVTPPPTTP (95 aa)). Residues 18-36 (RRRPKKGLIKKKMVKREKQ) show a composition bias toward basic residues. An interaction with phosphoinositide-3 kinase region spans residues 90 to 92 (PPP). The chain crosses the membrane as a helical span at residues 96–116 (EWVKFCKQLFGGFSLLLWTGA). Over 117–139 (ILCFVAYSIQIYFNEEPTKDNLY) the chain is Extracellular. A helical transmembrane segment spans residues 140-160 (LSIVLSVVVIVTGCFSYYQEA). The Cytoplasmic segment spans residues 161 to 296 (KSSKIMESFK…VGQTPIAAEI (136 aa)). Polar residues predominate over residues 223–237 (NSSLTGESEPQSRSP). The disordered stretch occupies residues 223-242 (NSSLTGESEPQSRSPDFTHE). The helical transmembrane segment at 297 to 316 (EHFIHLITVVAVFLGVTFFA) threads the bilayer. Topologically, residues 317 to 328 (LSLLLGYGWLEA) are extracellular. The helical transmembrane segment at 329–346 (IIFLIGIIVANVPEGLLA) threads the bilayer. Residues 347–778 (TVTVCLTLTA…EEGRLIFDNL (432 aa)) lie on the Cytoplasmic side of the membrane. Catalysis depends on Asp-384, which acts as the 4-aspartylphosphate intermediate. Positions 723 and 727 each coordinate Mg(2+). A helical transmembrane segment spans residues 779-798 (KKSIMYTLTSNIPEITPFLM). The Extracellular portion of the chain corresponds to 799–808 (FIILGIPLPL). A helical membrane pass occupies residues 809-829 (GTITILCIDLGTDMVPAISLA). Topologically, residues 830 to 849 (YESAESDIMKRLPRNPKTDN) are cytoplasmic. A helical transmembrane segment spans residues 850-872 (LVNHRLIGMAYGQIGMIQALAGF). Topologically, residues 873–924 (FTYFVILAENGFRPVDLLGIRLHWEDKYLNDLEDSYGQQWTYEQRKVVEFTC) are extracellular. The helical transmembrane segment at 925–944 (QTAFFVTIVVVQWADLIISK) threads the bilayer. At 945 to 957 (TRRNSLFQQGMRN) the chain is on the cytoplasmic side. At Ser-949 the chain carries Phosphoserine; by PKA. A helical membrane pass occupies residues 958–976 (KVLIFGILEETLLAAFLSY). Over 977-991 (TPGMDVALRMYPLKI) the chain is Extracellular. The chain crosses the membrane as a helical span at residues 992-1012 (TWWLCAIPYSILIFVYDEIRK). Residues 1013 to 1029 (LLIRQHPDGWVERETYY) are Cytoplasmic-facing.

It belongs to the cation transport ATPase (P-type) (TC 3.A.3) family. Type IIC subfamily. The sodium/potassium-transporting ATPase is composed of a catalytic alpha subunit, an auxiliary non-catalytic beta subunit and an additional regulatory subunit. As to expression, specifically expressed in testis. Found in very low levels in skeletal muscle. Expressed in mature sperm (at protein level).

The protein resides in the cell membrane. It carries out the reaction K(+)(out) + Na(+)(in) + ATP + H2O = K(+)(in) + Na(+)(out) + ADP + phosphate + H(+). Its activity is regulated as follows. Specifically inhibited by an endogenous cardiac glycoside, ouabain. In terms of biological role, this is the catalytic component of the active enzyme, which catalyzes the hydrolysis of ATP coupled with the exchange of sodium and potassium ions across the plasma membrane. This action creates the electrochemical gradient of sodium and potassium ions, providing the energy for active transport of various nutrients. Plays a role in sperm motility. This chain is Sodium/potassium-transporting ATPase subunit alpha-4, found in Homo sapiens (Human).